Here is a 134-residue protein sequence, read N- to C-terminus: Histone H2A (134 aa).

Over residues 1 to 11 the composition is skewed to gly residues; sequence MTGGGKSGGKA. Positions 1-25 are disordered; it reads MTGGGKSGGKASGSKNAQSRSSKAG. N6-acetyllysine occurs at positions 6 and 10. Q107 carries the N5-methylglutamine modification. A Phosphoserine modification is found at S131. Residues 131–132 carry the [ST]-Q motif motif; the sequence is SQ.

The protein belongs to the histone H2A family. As to quaternary structure, the nucleosome is a histone octamer containing two molecules each of H2A, H2B, H3 and H4 assembled in one H3-H4 heterotetramer and two H2A-H2B heterodimers. The octamer wraps approximately 147 bp of DNA. In terms of processing, phosphorylated to form H2AS128ph (gamma-H2A) in response to DNA double-strand breaks (DSBs) generated by exogenous genotoxic agents and by stalled replication forks. Phosphorylation is dependent on the DNA damage checkpoint kinases mec-1/ATR and tel-1/ATM, spreads on either side of a detected DSB site and may mark the surrounding chromatin for recruitment of proteins required for DNA damage signaling and repair. Gamma-H2A is removed from the DNA prior to the strand invasion-primer extension step of the repair process and subsequently dephosphorylated. Dephosphorylation is necessary for efficient recovery from the DNA damage checkpoint. Acetylated by esa-1 to form H2AK4ac and H2AK7ac.

The protein resides in the nucleus. It is found in the chromosome. Functionally, core component of nucleosome which plays a central role in DNA double strand break (DSB) repair. Nucleosomes wrap and compact DNA into chromatin, limiting DNA accessibility to the cellular machineries which require DNA as a template. Histones thereby play a central role in transcription regulation, DNA repair, DNA replication and chromosomal stability. DNA accessibility is regulated via a complex set of post-translational modifications of histones, also called histone code, and nucleosome remodeling. The chain is Histone H2A (hh2a) from Neurospora crassa (strain ATCC 24698 / 74-OR23-1A / CBS 708.71 / DSM 1257 / FGSC 987).